Consider the following 295-residue polypeptide: GTPase Era (295 aa).

In terms of domain architecture, Era-type G spans 4-171 (KSGFVTIIGR…IKQIVSFLPE (168 aa)). Positions 12-19 (GRPNVGKS) are G1. 12-19 (GRPNVGKS) is a binding site for GTP. The interval 38 to 42 (QTTRN) is G2. A G3 region spans residues 59–62 (DTPG). Residues 59–63 (DTPGI) and 121–124 (NKID) contribute to the GTP site. The segment at 121–124 (NKID) is G4. The G5 stretch occupies residues 150–152 (ISA). The 79-residue stretch at 202-280 (LDQEIPHGIA…FLELWVKVNE (79 aa)) folds into the KH type-2 domain.

Belongs to the TRAFAC class TrmE-Era-EngA-EngB-Septin-like GTPase superfamily. Era GTPase family. In terms of assembly, monomer.

It is found in the cytoplasm. Its subcellular location is the cell membrane. Functionally, an essential GTPase that binds both GDP and GTP, with rapid nucleotide exchange. Plays a role in 16S rRNA processing and 30S ribosomal subunit biogenesis and possibly also in cell cycle regulation and energy metabolism. The protein is GTPase Era of Alkaliphilus metalliredigens (strain QYMF).